Consider the following 95-residue polypeptide: uncharacterized protein (95 aa).

The disordered stretch occupies residues Met-1 to Leu-73. 2 stretches are compositionally biased toward polar residues: residues Ser-42–Pro-52 and Gly-62–Leu-73.

This is an uncharacterized protein from Homo sapiens (Human).